The chain runs to 224 residues: MHINNWPTHERPREKLLAHGAATLSDAELLAIFLGSGLRGHDAVQTARNLLHTHGPLRELLDRPPGDLMRLPGLGLARACKLTAALELSTRHLAAALQRGASIHDPISAGRYFAQRLRANPNEVFAVLFLDNRHRAISFEELFHGTINGAEVHPREVVRRALTLNAAAVIVGHNHPSGNREPSPADRMITQRLKNALDLIDVRLVDHFVIGDGAPVSFAEHGWL.

An MPN domain is found at 102–224 (SIHDPISAGR…PVSFAEHGWL (123 aa)). Zn(2+)-binding residues include His-173, His-175, and Asp-186. Residues 173-186 (HNHPSGNREPSPAD) carry the JAMM motif motif.

The protein belongs to the UPF0758 family.

In Xylella fastidiosa (strain 9a5c), this protein is UPF0758 protein XF_0148.